We begin with the raw amino-acid sequence, 39 residues long: Large ribosomal subunit protein bL36 (39 aa).

The protein belongs to the bacterial ribosomal protein bL36 family.

This Pediococcus pentosaceus (strain ATCC 25745 / CCUG 21536 / LMG 10740 / 183-1w) protein is Large ribosomal subunit protein bL36.